Reading from the N-terminus, the 205-residue chain is MGSREEELRAIVRDLGISPYFLGTFDKRFPGFLHKDKLSCAIVNTAARETGGAHWLALAWFPNAKNFYFFDPFGFSDHKLKQIYQFEYEGLLRRSALAGDGCVNLVKSTETVQGPNSAACGLFCCMFLHAFVNWPDRPMTRNPTMDLLTGVPNADMMKPSSLAILRENQNQLYKFLSTHSQYFRTHRPQIERDTSFNKLLELKNQ.

Active-site residues include H54, D71, and C120.

Belongs to the peptidase C5 family. In terms of assembly, interacts with protease cofactor pVI-C; this interaction is necessary for protease activation.

It localises to the virion. The protein resides in the host nucleus. It carries out the reaction Cleaves proteins of the adenovirus and its host cell at two consensus sites: -Yaa-Xaa-Gly-Gly-|-Xaa- and -Yaa-Xaa-Gly-Xaa-|-Gly- (in which Yaa is Met, Ile or Leu, and Xaa is any amino acid).. Requires DNA and protease cofactor for maximal activation. Inside nascent virions, becomes partially activated by binding to the viral DNA, allowing it to cleave the cofactor that binds to the protease and fully activates it. Actin, like the viral protease cofactor, seems to act as a cofactor in the cleavage of cytokeratin 18 and of actin itself. Cleaves viral precursor proteins (pTP, pIIIa, pVI, pVII, pVIII, and pX) inside newly assembled particles giving rise to mature virions. Protease complexed to its cofactor slides along the viral DNA to specifically locate and cleave the viral precursors. Mature virions have a weakened organization compared to the unmature virions, thereby facilitating subsequent uncoating. Without maturation, the particle lacks infectivity and is unable to uncoat. Late in adenovirus infection, in the cytoplasm, may participate in the cytoskeleton destruction. Cleaves host cell cytoskeletal keratins K7 and K18. This chain is Protease, found in Bos taurus (Bovine).